We begin with the raw amino-acid sequence, 215 residues long: Pyrrolidone-carboxylate peptidase (215 aa).

Active-site residues include glutamate 78, cysteine 141, and histidine 165.

This sequence belongs to the peptidase C15 family. In terms of assembly, homotetramer.

It is found in the cytoplasm. The enzyme catalyses Release of an N-terminal pyroglutamyl group from a polypeptide, the second amino acid generally not being Pro.. Removes 5-oxoproline from various penultimate amino acid residues except L-proline. This Streptococcus pyogenes serotype M1 protein is Pyrrolidone-carboxylate peptidase (pcp).